The primary structure comprises 191 residues: MGILYSEPICQAAYQNDFGQVWRWVKEDSSYANVQDGFNGDTPLICACRRGHVRIVSFLLRRNANVNLKNQKERTCLHYAVKKKFTFIDYLLIILLMPVLLIGYFLMVSKTKQNEALVRMLLDAGVEVNATDCYGCTALHYACEMKNQSLIPLLLEARADPTIKNKHGESSLDIARRLKFSQIELMLRKAL.

ANK repeat units follow at residues Asn39–Leu68, Lys72–Leu100, Leu101–Ala130, and Tyr134–Ile163.

The chain is Ankyrin repeat domain-containing protein 22 (ANKRD22) from Homo sapiens (Human).